The following is a 443-amino-acid chain: ATP-dependent protease ATPase subunit HslU (443 aa).

Residues I18 and 60-65 (GVGKTE) each bind ATP. Positions 138–158 (PAENQWGEKEQNEDKGTRQTF) are disordered. Basic and acidic residues predominate over residues 143–154 (WGEKEQNEDKGT). ATP-binding residues include D255, E321, and R393.

The protein belongs to the ClpX chaperone family. HslU subfamily. In terms of assembly, a double ring-shaped homohexamer of HslV is capped on each side by a ring-shaped HslU homohexamer. The assembly of the HslU/HslV complex is dependent on binding of ATP.

It localises to the cytoplasm. Functionally, ATPase subunit of a proteasome-like degradation complex; this subunit has chaperone activity. The binding of ATP and its subsequent hydrolysis by HslU are essential for unfolding of protein substrates subsequently hydrolyzed by HslV. HslU recognizes the N-terminal part of its protein substrates and unfolds these before they are guided to HslV for hydrolysis. This Pseudoalteromonas atlantica (strain T6c / ATCC BAA-1087) protein is ATP-dependent protease ATPase subunit HslU.